Consider the following 625-residue polypeptide: Interferon-induced GTP-binding protein Mx2 (625 aa).

The region spanning 29-302 (DLALPAIAVI…LVFHIGRCLP (274 aa)) is the Dynamin-type G domain. The interval 39 to 46 (GDQSSGKS) is G1 motif. 39 to 46 (GDQSSGKS) is a binding site for GTP. Residues 64–66 (VTR) form a G2 motif region. The segment at 140-143 (DLPG) is G3 motif. GTP contacts are provided by residues 140–144 (DLPGI) and 209–212 (TKPD). The segment at 209–212 (TKPD) is G4 motif. The segment at 241–244 (RCRG) is G5 motif. The region spanning 539 to 625 (REELTCHLKS…TEALKYLAKF (87 aa)) is the GED domain.

This sequence belongs to the TRAFAC class dynamin-like GTPase superfamily. Dynamin/Fzo/YdjA family.

It is found in the cytoplasm. This chain is Interferon-induced GTP-binding protein Mx2 (mx2), found in Ictalurus punctatus (Channel catfish).